The following is a 476-amino-acid chain: Glycogen synthase (476 aa).

Residue lysine 15 participates in ADP-alpha-D-glucose binding.

This sequence belongs to the glycosyltransferase 1 family. Bacterial/plant glycogen synthase subfamily.

It carries out the reaction [(1-&gt;4)-alpha-D-glucosyl](n) + ADP-alpha-D-glucose = [(1-&gt;4)-alpha-D-glucosyl](n+1) + ADP + H(+). It participates in glycan biosynthesis; glycogen biosynthesis. Synthesizes alpha-1,4-glucan chains using ADP-glucose. This chain is Glycogen synthase, found in Yersinia pseudotuberculosis serotype O:1b (strain IP 31758).